The sequence spans 256 residues: Probable ATP-dependent transporter slr0075 (256 aa).

Positions 6 to 250 (LSIKNLTASV…EEKGYDFLDE (245 aa)) constitute an ABC transporter domain. 38 to 45 (GRNGSGKS) is an ATP binding site.

This sequence belongs to the ABC transporter superfamily. Ycf16 family.

This Synechocystis sp. (strain ATCC 27184 / PCC 6803 / Kazusa) protein is Probable ATP-dependent transporter slr0075.